Consider the following 453-residue polypeptide: MSWSLHPRNLILYFYALLFLSSTCVAYVATRDNCCILDERFGSYCPTTCGIADFLSTYQTKVDKDLQSLEDILHQVENKTSEVKQLIKAIQLTYNPDESSKPNMIDAATLKSRKMLEEIMKYEASILTHDSSIRYLQEIYNSNNQKIVNLKEKVAQLEAQCQEPCKDTVQIHDITGKDCQDIANKGAKQSGLYFIKPLKANQQFLVYCEIDGSGNGWTVFQKRLDGSVDFKKNWIQYKEGFGHLSPTGTTEFWLGNEKIHLISTQSAIPYALRVELEDWNGRTSTADYAMFKVGPEADKYRLTYAYFAGGDAGDAFDGFDFGDDPSDKFFTSHNGMQFSTWDNDNDKFEGNCAEQDGSGWWMNKCHAGHLNGVYYQGGTYSKASTPNGYDNGIIWATWKTRWYSMKKTTMKIIPFNRLTIGEGQQHHLGGAKQVRPEHPAETEYDSLYPEDDL.

Residues 1–26 (MSWSLHPRNLILYFYALLFLSSTCVA) form the signal peptide. Ser-68 carries the phosphoserine; by FAM20C modification. Residue Asn-78 is glycosylated (N-linked (GlcNAc...) (complex) asparagine). One can recognise a Fibrinogen C-terminal domain in the interval 170-416 (QIHDITGKDC…KTTMKIIPFN (247 aa)). Cys-179 and Cys-208 are oxidised to a cystine. The N-linked (GlcNAc...) asparagine; in variant Asahi glycan is linked to Asn-334. Ca(2+) contacts are provided by Asp-344, Asp-346, Phe-348, and Gly-350. Cys-352 and Cys-365 are oxidised to a cystine. The gamma-chain polymerization, binding amino end of another fibrin alpha chain stretch occupies residues 400–422 (TRWYSMKKTTMKIIPFNRLTIGE). Positions 423–437 (GQQHHLGGAKQVRPE) are platelet aggregation and Staphylococcus clumping. Residue Gln-424 forms an Isoglutamyl lysine isopeptide (Gln-Lys) (interchain with K-432) linkage. Residues 424–453 (QQHHLGGAKQVRPEHPAETEYDSLYPEDDL) are disordered. An Isoglutamyl lysine isopeptide (Lys-Gln) (interchain with Q-424) cross-link involves residue Lys-432. The segment covering 442–453 (TEYDSLYPEDDL) has biased composition (acidic residues). Sulfotyrosine is present on residues Tyr-444 and Tyr-448.

In terms of assembly, heterohexamer; disulfide linked. Contains 2 sets of 3 non-identical chains (alpha, beta and gamma). The 2 heterotrimers are in head to head conformation with the N-termini in a small central domain. Conversion of fibrinogen to fibrin is triggered by thrombin, which cleaves fibrinopeptides A and B from alpha and beta chains, and thus exposes the N-terminal polymerization sites responsible for the formation of the soft clot. The soft clot is converted into the hard clot by factor XIIIA which catalyzes the epsilon-(gamma-glutamyl)lysine cross-linking between gamma chains (stronger) and between alpha chains (weaker) of different monomers. In terms of processing, sulfation of C-terminal tyrosines increases affinity for thrombin. As to expression, detected in blood plasma (at protein level).

The protein localises to the secreted. Together with fibrinogen alpha (FGA) and fibrinogen beta (FGB), polymerizes to form an insoluble fibrin matrix. Has a major function in hemostasis as one of the primary components of blood clots. In addition, functions during the early stages of wound repair to stabilize the lesion and guide cell migration during re-epithelialization. Was originally thought to be essential for platelet aggregation, based on in vitro studies using anticoagulated blood. However, subsequent studies have shown that it is not absolutely required for thrombus formation in vivo. Enhances expression of SELP in activated platelets via an ITGB3-dependent pathway. Maternal fibrinogen is essential for successful pregnancy. Fibrin deposition is also associated with infection, where it protects against IFNG-mediated hemorrhage. May also facilitate the antibacterial immune response via both innate and T-cell mediated pathways. This is Fibrinogen gamma chain (FGG) from Homo sapiens (Human).